A 94-amino-acid polypeptide reads, in one-letter code: Small ribosomal subunit protein uS19c (94 aa).

It belongs to the universal ribosomal protein uS19 family.

Its subcellular location is the plastid. It localises to the chloroplast. Functionally, protein S19 forms a complex with S13 that binds strongly to the 16S ribosomal RNA. This is Small ribosomal subunit protein uS19c from Pleurastrum terricola (Filamentous green alga).